Reading from the N-terminus, the 252-residue chain is Probable transcriptional regulatory protein Caur_1043 (252 aa).

Residues 1-14 show a composition bias toward basic residues; the sequence is MSGHSKWHTIRRTK. The interval 1–22 is disordered; sequence MSGHSKWHTIRRTKGVNDQRRG.

Belongs to the TACO1 family.

Its subcellular location is the cytoplasm. This Chloroflexus aurantiacus (strain ATCC 29366 / DSM 635 / J-10-fl) protein is Probable transcriptional regulatory protein Caur_1043.